Consider the following 222-residue polypeptide: Ribosomal RNA small subunit methyltransferase G (222 aa).

Residues G80, L85, 131–132 (VE), and R148 contribute to the S-adenosyl-L-methionine site.

Belongs to the methyltransferase superfamily. RNA methyltransferase RsmG family.

It localises to the cytoplasm. The catalysed reaction is guanosine(527) in 16S rRNA + S-adenosyl-L-methionine = N(7)-methylguanosine(527) in 16S rRNA + S-adenosyl-L-homocysteine. Its function is as follows. Specifically methylates the N7 position of guanine in position 527 of 16S rRNA. This is Ribosomal RNA small subunit methyltransferase G from Polynucleobacter asymbioticus (strain DSM 18221 / CIP 109841 / QLW-P1DMWA-1) (Polynucleobacter necessarius subsp. asymbioticus).